The chain runs to 208 residues: Na(+)-translocating NADH-quinone reductase subunit D (208 aa).

5 helical membrane-spanning segments follow: residues 42 to 62 (IVMG…ISLV), 72 to 92 (IIVQ…LLQA), 103 to 123 (VFVG…AFAM), 131 to 151 (LIDG…VATV), and 178 to 198 (NGLF…IWGL).

It belongs to the NqrDE/RnfAE family. In terms of assembly, composed of six subunits; NqrA, NqrB, NqrC, NqrD, NqrE and NqrF.

Its subcellular location is the cell inner membrane. The catalysed reaction is a ubiquinone + n Na(+)(in) + NADH + H(+) = a ubiquinol + n Na(+)(out) + NAD(+). Its function is as follows. NQR complex catalyzes the reduction of ubiquinone-1 to ubiquinol by two successive reactions, coupled with the transport of Na(+) ions from the cytoplasm to the periplasm. NqrA to NqrE are probably involved in the second step, the conversion of ubisemiquinone to ubiquinol. The chain is Na(+)-translocating NADH-quinone reductase subunit D from Neisseria gonorrhoeae (strain ATCC 700825 / FA 1090).